The sequence spans 24 residues: Large ribosomal subunit protein uL10 (24 aa).

It belongs to the universal ribosomal protein uL10 family. Part of the ribosomal stalk of the 50S ribosomal subunit. The N-terminus interacts with L11 and the large rRNA to form the base of the stalk. The C-terminus forms an elongated spine to which L12 dimers bind in a sequential fashion forming a multimeric L10(L12)X complex.

Its function is as follows. Forms part of the ribosomal stalk, playing a central role in the interaction of the ribosome with GTP-bound translation factors. The chain is Large ribosomal subunit protein uL10 (rplJ) from Enterobacter cloacae.